Here is a 941-residue protein sequence, read N- to C-terminus: 26S proteasome regulatory subunit RPN2 (941 aa).

10 PC repeats span residues 363-396, 400-437, 442-476, 477-511, 513-546, 547-582, 583-615, 617-651, 652-689, and 695-731; these read SATA…SSRF, GSLY…EDVD, GASL…TSGE, AAAF…GNIT, GLSM…LIRY, GGAF…DVRR, AAVT…AHDR, GAAF…FVRQ, AAMI…KHQE, and GACV…VGLA. The disordered stretch occupies residues 808–854; that stretch reads KARAKKTKKEKDTNEDDKKKKEKDLKKEETKKDDAKKESEAEEDFNK. Residues 816 to 854 are compositionally biased toward basic and acidic residues; the sequence is KEKDTNEDDKKKKEKDLKKEETKKDDAKKESEAEEDFNK.

It belongs to the proteasome subunit S1 family.

Functionally, acts as a regulatory subunit of the 26S proteasome which is involved in the ATP-dependent degradation of ubiquitinated proteins. This Candida glabrata (strain ATCC 2001 / BCRC 20586 / JCM 3761 / NBRC 0622 / NRRL Y-65 / CBS 138) (Yeast) protein is 26S proteasome regulatory subunit RPN2 (RPN2).